Here is a 209-residue protein sequence, read N- to C-terminus: Small ribosomal subunit protein uS4 (209 aa).

The S4 RNA-binding domain maps to 99–161 (CRLDNIAFRL…SSKLVVVEMG (63 aa)).

Belongs to the universal ribosomal protein uS4 family. Part of the 30S ribosomal subunit. Contacts protein S5. The interaction surface between S4 and S5 is involved in control of translational fidelity.

Functionally, one of the primary rRNA binding proteins, it binds directly to 16S rRNA where it nucleates assembly of the body of the 30S subunit. With S5 and S12 plays an important role in translational accuracy. This chain is Small ribosomal subunit protein uS4, found in Acidobacterium capsulatum (strain ATCC 51196 / DSM 11244 / BCRC 80197 / JCM 7670 / NBRC 15755 / NCIMB 13165 / 161).